The sequence spans 85 residues: Large ribosomal subunit protein bL31B (85 aa).

Belongs to the bacterial ribosomal protein bL31 family. Type B subfamily. Part of the 50S ribosomal subunit.

The chain is Large ribosomal subunit protein bL31B from Clavibacter sepedonicus (Clavibacter michiganensis subsp. sepedonicus).